Consider the following 565-residue polypeptide: CTP synthase (565 aa).

The tract at residues 1-272 is amidoligase domain; that stretch reads MARPKNVKHI…DLRVLKKLGL (272 aa). Ser-18 contacts CTP. Ser-18 lines the UTP pocket. 19–24 contributes to the ATP binding site; the sequence is SLGKGI. Tyr-59 provides a ligand contact to L-glutamine. An ATP-binding site is contributed by Asp-76. Mg(2+) contacts are provided by Asp-76 and Glu-146. CTP is bound by residues 153 to 155, 193 to 198, and Lys-229; these read DIE and KTKPTQ. Residues 193–198 and Lys-229 contribute to the UTP site; that span reads KTKPTQ. The region spanning 299 to 543 is the Glutamine amidotransferase type-1 domain; the sequence is TIGICGKYTE…VAAAKEYAHG (245 aa). Gly-363 is an L-glutamine binding site. Cys-390 functions as the Nucleophile; for glutamine hydrolysis in the catalytic mechanism. L-glutamine is bound by residues 391-394, Glu-414, and Arg-471; that span reads LGMQ. Catalysis depends on residues His-516 and Glu-518.

The protein belongs to the CTP synthase family. Homotetramer.

The catalysed reaction is UTP + L-glutamine + ATP + H2O = CTP + L-glutamate + ADP + phosphate + 2 H(+). The enzyme catalyses L-glutamine + H2O = L-glutamate + NH4(+). It carries out the reaction UTP + NH4(+) + ATP = CTP + ADP + phosphate + 2 H(+). Its pathway is pyrimidine metabolism; CTP biosynthesis via de novo pathway; CTP from UDP: step 2/2. Allosterically activated by GTP, when glutamine is the substrate; GTP has no effect on the reaction when ammonia is the substrate. The allosteric effector GTP functions by stabilizing the protein conformation that binds the tetrahedral intermediate(s) formed during glutamine hydrolysis. Inhibited by the product CTP, via allosteric rather than competitive inhibition. Its function is as follows. Catalyzes the ATP-dependent amination of UTP to CTP with either L-glutamine or ammonia as the source of nitrogen. Regulates intracellular CTP levels through interactions with the four ribonucleotide triphosphates. The chain is CTP synthase from Pelodictyon phaeoclathratiforme (strain DSM 5477 / BU-1).